A 237-amino-acid polypeptide reads, in one-letter code: MTNHQKRLAVPKSWPVERKEEAYTTKAAAGPHGEEGVPLLIVLRDVLGYVDSKKEARYALEQDSILINGTAVSDERRPVGMFDILAFDEREEYYRIFPDEGGRLSLTPIDEDAAGSKLGKIVGKTQVAGGDTQLSLHDGETLLVEDATAYDTNDSIVVSNDGEEIVAHFTYEEGALVTAVSGAHAGRIGTIDEIQVTPGSSANNVLIDAENDDERFETVEEYVVVIDENFTDGGDDE.

The S4 RNA-binding domain occupies 37 to 99 (VPLLIVLRDV…REEYYRIFPD (63 aa)).

The protein belongs to the eukaryotic ribosomal protein eS4 family.

In Natronomonas pharaonis (strain ATCC 35678 / DSM 2160 / CIP 103997 / JCM 8858 / NBRC 14720 / NCIMB 2260 / Gabara) (Halobacterium pharaonis), this protein is Small ribosomal subunit protein eS4.